The sequence spans 461 residues: UDP-N-acetylmuramate--L-alanine ligase (461 aa).

112 to 118 (GTHGKTT) provides a ligand contact to ATP.

This sequence belongs to the MurCDEF family.

The protein resides in the cytoplasm. It catalyses the reaction UDP-N-acetyl-alpha-D-muramate + L-alanine + ATP = UDP-N-acetyl-alpha-D-muramoyl-L-alanine + ADP + phosphate + H(+). It functions in the pathway cell wall biogenesis; peptidoglycan biosynthesis. Functionally, cell wall formation. The protein is UDP-N-acetylmuramate--L-alanine ligase of Geobacter sp. (strain M21).